The following is a 263-amino-acid chain: Rano class II histocompatibility antigen, B-1 beta chain (263 aa).

The N-terminal stretch at 1 to 27 (MALQTPSFLLPAAVVVLMVLSSPGTEG) is a signal peptide. The beta-1 stretch occupies residues 28 to 120 (RDSPRDFVYQ…SEVRTSLRRL (93 aa)). Over 28-224 (RDSPRDFVYQ…RAQSESAQSK (197 aa)) the chain is Extracellular. Cystine bridges form between Cys-42-Cys-104 and Cys-143-Cys-199. An N-linked (GlcNAc...) asparagine glycan is attached at Asn-46. The tract at residues 121 to 214 (EQPNVAISLS…SLESPVTVEW (94 aa)) is beta-2. The 89-residue stretch at 123-211 (PNVAISLSRT…DHPSLESPVT (89 aa)) folds into the Ig-like C1-type domain. The connecting peptide stretch occupies residues 215–224 (RAQSESAQSK). The chain crosses the membrane as a helical span at residues 225–245 (MLSGIGGFVLGVIFLGLGLFI). Topologically, residues 246 to 263 (RHKRQKGPRGPPPAGLLQ) are cytoplasmic. Lys-251 participates in a covalent cross-link: Glycyl lysine isopeptide (Lys-Gly) (interchain with G-Cter in ubiquitin).

This sequence belongs to the MHC class II family.

It is found in the membrane. Its function is as follows. Involved in the presentation of foreign antigens to the immune system. In Rattus norvegicus (Rat), this protein is Rano class II histocompatibility antigen, B-1 beta chain (RT1-Bb).